A 403-amino-acid polypeptide reads, in one-letter code: Phosphopentomutase (403 aa).

Positions 13, 298, 303, 339, 340, and 351 each coordinate Mn(2+).

This sequence belongs to the phosphopentomutase family. It depends on Mn(2+) as a cofactor.

Its subcellular location is the cytoplasm. It catalyses the reaction 2-deoxy-alpha-D-ribose 1-phosphate = 2-deoxy-D-ribose 5-phosphate. The catalysed reaction is alpha-D-ribose 1-phosphate = D-ribose 5-phosphate. It participates in carbohydrate degradation; 2-deoxy-D-ribose 1-phosphate degradation; D-glyceraldehyde 3-phosphate and acetaldehyde from 2-deoxy-alpha-D-ribose 1-phosphate: step 1/2. Its function is as follows. Isomerase that catalyzes the conversion of deoxy-ribose 1-phosphate (dRib-1-P) and ribose 1-phosphate (Rib-1-P) to deoxy-ribose 5-phosphate (dRib-5-P) and ribose 5-phosphate (Rib-5-P), respectively. In Streptococcus pyogenes serotype M2 (strain MGAS10270), this protein is Phosphopentomutase.